Here is a 389-residue protein sequence, read N- to C-terminus: MSTENLPQNPEQSPRRPPRKPRVAVVFGGRSSEHGISVVTAGAVLAAIDRTRYDVLPIGITRDGRWALTADEPERMAITERRTPDVEELAESTEGGVLLPVDPANREVVYSEPGSVPKALGEVDVVFPVLHGPYGEDGTLQGLLELSGVPYVGAGVLASAVGQDKEYMKAVFTSYGLKVGPYAVIRPREWEQDRSGARKKIVDFAGEHGWPLFVKPARAGSSIGITKVDDLAGLDEAIEEARRHDPKILVEAALRGREIECGVLEFEDGPRASVPAEIPPPSEHAYYDFEAKYIDSTPGIVPAPLTAEETAEVQRLAVAAFDAASCEGLVRADFFLTEDDEFVINEINTMPGFTPISMYPQMWQASGVSYPELVDRLVQAALRRPTGLR.

Positions 1 to 12 (MSTENLPQNPEQ) are enriched in polar residues. Residues 1–22 (MSTENLPQNPEQSPRRPPRKPR) form a disordered region. The 211-residue stretch at 169–379 (KAVFTSYGLK…YPELVDRLVQ (211 aa)) folds into the ATP-grasp domain. 205–260 (AGEHGWPLFVKPARAGSSIGITKVDDLAGLDEAIEEARRHDPKILVEAALRGREIE) is an ATP binding site. The Mg(2+) site is built by Asp333, Glu346, and Asn348.

This sequence belongs to the D-alanine--D-alanine ligase family. Mg(2+) serves as cofactor. Mn(2+) is required as a cofactor.

It localises to the cytoplasm. It catalyses the reaction 2 D-alanine + ATP = D-alanyl-D-alanine + ADP + phosphate + H(+). Its pathway is cell wall biogenesis; peptidoglycan biosynthesis. Functionally, cell wall formation. This is D-alanine--D-alanine ligase (ddl) from Streptomyces coelicolor (strain ATCC BAA-471 / A3(2) / M145).